The primary structure comprises 269 residues: Tryptophan synthase alpha chain (269 aa).

Catalysis depends on proton acceptor residues glutamate 49 and aspartate 60.

The protein belongs to the TrpA family. Tetramer of two alpha and two beta chains.

It carries out the reaction (1S,2R)-1-C-(indol-3-yl)glycerol 3-phosphate + L-serine = D-glyceraldehyde 3-phosphate + L-tryptophan + H2O. It functions in the pathway amino-acid biosynthesis; L-tryptophan biosynthesis; L-tryptophan from chorismate: step 5/5. Functionally, the alpha subunit is responsible for the aldol cleavage of indoleglycerol phosphate to indole and glyceraldehyde 3-phosphate. The polypeptide is Tryptophan synthase alpha chain (Histophilus somni (strain 2336) (Haemophilus somnus)).